A 1225-amino-acid polypeptide reads, in one-letter code: DNA-directed RNA polymerase subunit beta' (1225 aa).

Positions 60, 62, 75, and 78 each coordinate Zn(2+). Positions 450, 452, and 454 each coordinate Mg(2+). Cys818, Cys892, Cys899, and Cys902 together coordinate Zn(2+).

The protein belongs to the RNA polymerase beta' chain family. In terms of assembly, the RNAP catalytic core consists of 2 alpha, 1 beta, 1 beta' and 1 omega subunit. When a sigma factor is associated with the core the holoenzyme is formed, which can initiate transcription. Mg(2+) serves as cofactor. Requires Zn(2+) as cofactor.

It catalyses the reaction RNA(n) + a ribonucleoside 5'-triphosphate = RNA(n+1) + diphosphate. Its function is as follows. DNA-dependent RNA polymerase catalyzes the transcription of DNA into RNA using the four ribonucleoside triphosphates as substrates. The protein is DNA-directed RNA polymerase subunit beta' of Streptococcus pneumoniae (strain ATCC BAA-255 / R6).